A 188-amino-acid polypeptide reads, in one-letter code: Threonylcarbamoyl-AMP synthase (188 aa).

The YrdC-like domain maps to Q3–Q188.

It belongs to the SUA5 family. TsaC subfamily.

Its subcellular location is the cytoplasm. The enzyme catalyses L-threonine + hydrogencarbonate + ATP = L-threonylcarbamoyladenylate + diphosphate + H2O. In terms of biological role, required for the formation of a threonylcarbamoyl group on adenosine at position 37 (t(6)A37) in tRNAs that read codons beginning with adenine. Catalyzes the conversion of L-threonine, HCO(3)(-)/CO(2) and ATP to give threonylcarbamoyl-AMP (TC-AMP) as the acyladenylate intermediate, with the release of diphosphate. The protein is Threonylcarbamoyl-AMP synthase of Shewanella sp. (strain MR-4).